Here is a 266-residue protein sequence, read N- to C-terminus: Type II iodothyronine deiodinase (266 aa).

The Lumenal portion of the chain corresponds to 1–13; that stretch reads MGSASEDLLVTLQ. The chain crosses the membrane as a helical; Signal-anchor for type III membrane protein span at residues 14-34; it reads ILPGFFSNCLFLALYDSVVLV. Residues 35–266 lie on the Cytoplasmic side of the membrane; it reads KRVVALLSRS…QWLELSYGRR (232 aa). The active site involves Sec134. Sec134 is a non-standard amino acid (selenocysteine).

This sequence belongs to the iodothyronine deiodinase family. As to quaternary structure, predominantly monomer. Can form homodimers but homodimerization is not essential for enzyme activity.

The protein localises to the endoplasmic reticulum membrane. It catalyses the reaction 3,3',5-triiodo-L-thyronine + iodide + A + H(+) = L-thyroxine + AH2. It carries out the reaction 3,3'-diiodo-L-thyronine + iodide + A + H(+) = 3,3',5'-triiodo-L-thyronine + AH2. The enzyme catalyses 3'-iodo-L-thyronine + iodide + A + H(+) = 3',5'-diiodo-L-thyronine + AH2. With respect to regulation, not inhibited by N(6)-propylthiouracil. In terms of biological role, plays a crucial role in the metabolism of thyroid hormones (TH) and has specific roles in TH activation and inactivation by deiodination. Catalyzes the conversion of T4 (L-thyroxine/3,5,3',5'-tetraiodothyronine) to T3 (3,5,3'-triiodothyronine) and rT3 (3,3',5'-triiodothyronine) to T2 (3,3'-diiodothyronine) via outer-ring deiodination (ORD). Catalyzes the conversion 3',5'-T2 (3,5-diiodothyronine) to 3-T1 (3-monoiodothyronine) via ORD. This chain is Type II iodothyronine deiodinase (dio2), found in Fundulus heteroclitus (Killifish).